Reading from the N-terminus, the 246-residue chain is Phosphonates import ATP-binding protein PhnC (246 aa).

The ABC transporter domain maps to 2 to 246 (IKFENVSKIY…ILDEVYRKEA (245 aa)). 35 to 42 (GTSGAGKS) provides a ligand contact to ATP.

This sequence belongs to the ABC transporter superfamily. Phosphonates importer (TC 3.A.1.9.1) family. As to quaternary structure, the complex is composed of two ATP-binding proteins (PhnC), two transmembrane proteins (PhnE) and a solute-binding protein (PhnD).

The protein localises to the cell membrane. The catalysed reaction is phosphonate(out) + ATP + H2O = phosphonate(in) + ADP + phosphate + H(+). In terms of biological role, part of the ABC transporter complex PhnCDE involved in phosphonates import. Responsible for energy coupling to the transport system. This is Phosphonates import ATP-binding protein PhnC from Lactococcus lactis subsp. lactis (strain IL1403) (Streptococcus lactis).